Reading from the N-terminus, the 162-residue chain is Protein-export protein SecB (162 aa).

The protein belongs to the SecB family. As to quaternary structure, homotetramer, a dimer of dimers. One homotetramer interacts with 1 SecA dimer.

It is found in the cytoplasm. One of the proteins required for the normal export of preproteins out of the cell cytoplasm. It is a molecular chaperone that binds to a subset of precursor proteins, maintaining them in a translocation-competent state. It also specifically binds to its receptor SecA. This chain is Protein-export protein SecB, found in Bradyrhizobium sp. (strain BTAi1 / ATCC BAA-1182).